We begin with the raw amino-acid sequence, 466 residues long: Asparagine--tRNA ligase (466 aa).

This sequence belongs to the class-II aminoacyl-tRNA synthetase family. In terms of assembly, homodimer.

It localises to the cytoplasm. The enzyme catalyses tRNA(Asn) + L-asparagine + ATP = L-asparaginyl-tRNA(Asn) + AMP + diphosphate + H(+). The chain is Asparagine--tRNA ligase from Shewanella frigidimarina (strain NCIMB 400).